The following is a 530-amino-acid chain: UDP-glucuronosyltransferase 2B17 (530 aa).

The N-terminal stretch at 1-23 is a signal peptide; the sequence is MPGKWISALLLLQISCCFRSVKC. Residues asparagine 316 and asparagine 483 are each glycosylated (N-linked (GlcNAc...) asparagine). Residues 494–510 form a helical membrane-spanning segment; the sequence is VIGFLLSCVATTIVLSV.

It belongs to the UDP-glycosyltransferase family.

Its subcellular location is the endoplasmic reticulum membrane. It carries out the reaction glucuronate acceptor + UDP-alpha-D-glucuronate = acceptor beta-D-glucuronoside + UDP + H(+). The catalysed reaction is 17alpha-estradiol + UDP-alpha-D-glucuronate = 17alpha-estradiol 3-O-(beta-D-glucuronate) + UDP + H(+). The enzyme catalyses 17alpha-estradiol + UDP-alpha-D-glucuronate = 17alpha-estradiol 17-O-(beta-D-glucuronate) + UDP + H(+). It catalyses the reaction 17beta-estradiol + UDP-alpha-D-glucuronate = 17beta-estradiol 17-O-(beta-D-glucuronate) + UDP + H(+). It carries out the reaction 17beta-hydroxy-5alpha-androstan-3-one + UDP-alpha-D-glucuronate = 5alpha-dihydrotestosterone 17-O-(beta-D-glucuronate) + UDP + H(+). The catalysed reaction is testosterone + UDP-alpha-D-glucuronate = testosterone 17-O-(beta-D-glucuronate) + UDP + H(+). UDP-glucuronosyltransferase (UGT) that catalyzes phase II biotransformation reactions in which lipophilic substrates are conjugated with glucuronic acid to increase the metabolite's water solubility, thereby facilitating excretion into either the urine or bile. Catalyzes the glucuronidation of endogenous steroid hormones such as androgens (epitestosterone, androsterone) and estrogens (estradiol, epiestradiol). This chain is UDP-glucuronosyltransferase 2B17, found in Mus musculus (Mouse).